A 953-amino-acid chain; its full sequence is Isoleucine--tRNA ligase (953 aa).

The short motif at 57-67 (PYANGDIHIGH) is the 'HIGH' region element. Glutamate 582 serves as a coordination point for L-isoleucyl-5'-AMP. The 'KMSKS' region signature appears at 623 to 627 (KMSKS). Position 626 (lysine 626) interacts with ATP. Zn(2+) is bound by residues cysteine 916, cysteine 919, cysteine 936, and cysteine 939.

This sequence belongs to the class-I aminoacyl-tRNA synthetase family. IleS type 1 subfamily. In terms of assembly, monomer. Zn(2+) is required as a cofactor.

It is found in the cytoplasm. The enzyme catalyses tRNA(Ile) + L-isoleucine + ATP = L-isoleucyl-tRNA(Ile) + AMP + diphosphate. Functionally, catalyzes the attachment of isoleucine to tRNA(Ile). As IleRS can inadvertently accommodate and process structurally similar amino acids such as valine, to avoid such errors it has two additional distinct tRNA(Ile)-dependent editing activities. One activity is designated as 'pretransfer' editing and involves the hydrolysis of activated Val-AMP. The other activity is designated 'posttransfer' editing and involves deacylation of mischarged Val-tRNA(Ile). The protein is Isoleucine--tRNA ligase of Bordetella avium (strain 197N).